The sequence spans 327 residues: Serine/threonine-protein phosphatase PP1-1 (327 aa).

Positions 63, 65, 91, and 123 each coordinate Mn(2+). His-124 (proton donor) is an active-site residue. Residues His-172 and His-247 each coordinate Mn(2+). The segment at 305–327 is disordered; the sequence is GYQGSSQNWHMTPPRKNKTGNSK. Thr-316 is subject to Phosphothreonine; by CDC2. Positions 317 to 327 are enriched in basic residues; sequence PPRKNKTGNSK.

Belongs to the PPP phosphatase family. PP-1 subfamily. As to quaternary structure, oligomer. Requires Mn(2+) as cofactor.

It localises to the nucleus. It carries out the reaction O-phospho-L-seryl-[protein] + H2O = L-seryl-[protein] + phosphate. The enzyme catalyses O-phospho-L-threonyl-[protein] + H2O = L-threonyl-[protein] + phosphate. Its function is as follows. Essential role in cell cycle control. PP1 is perhaps required for exit from mitosis. The polypeptide is Serine/threonine-protein phosphatase PP1-1 (dis2) (Schizosaccharomyces pombe (strain 972 / ATCC 24843) (Fission yeast)).